The primary structure comprises 346 residues: Protein pelota homolog (346 aa).

The protein belongs to the eukaryotic release factor 1 family. Pelota subfamily. As to quaternary structure, monomer. Requires a divalent metal cation as cofactor.

It localises to the cytoplasm. In terms of biological role, may function in recognizing stalled ribosomes, interact with stem-loop structures in stalled mRNA molecules, and effect endonucleolytic cleavage of the mRNA. May play a role in the release non-functional ribosomes and degradation of damaged mRNAs. Has endoribonuclease activity. The protein is Protein pelota homolog of Ignicoccus hospitalis (strain KIN4/I / DSM 18386 / JCM 14125).